The chain runs to 271 residues: Ribosomal RNA small subunit methyltransferase A (271 aa).

Residues Asn22, Leu24, Gly49, Glu70, Asp96, and Asn116 each coordinate S-adenosyl-L-methionine.

This sequence belongs to the class I-like SAM-binding methyltransferase superfamily. rRNA adenine N(6)-methyltransferase family. RsmA subfamily.

It localises to the cytoplasm. The enzyme catalyses adenosine(1518)/adenosine(1519) in 16S rRNA + 4 S-adenosyl-L-methionine = N(6)-dimethyladenosine(1518)/N(6)-dimethyladenosine(1519) in 16S rRNA + 4 S-adenosyl-L-homocysteine + 4 H(+). In terms of biological role, specifically dimethylates two adjacent adenosines (A1518 and A1519) in the loop of a conserved hairpin near the 3'-end of 16S rRNA in the 30S particle. May play a critical role in biogenesis of 30S subunits. The chain is Ribosomal RNA small subunit methyltransferase A from Sphingopyxis alaskensis (strain DSM 13593 / LMG 18877 / RB2256) (Sphingomonas alaskensis).